The primary structure comprises 362 residues: Homeobox protein extradenticle (362 aa).

The PBC domain maps to 34–225 (PRKQDIGEIL…VMILRSRFLD (192 aa)). Residues 41–120 (EILQQIMNIT…EGVAGPEKGG (80 aa)) form a PBC-A region. The tract at residues 123–225 (DFLSQSDLTG…VMILRSRFLD (103 aa)) is PBC-B. Positions 226–288 (ARRKRRNFSK…NKRIRYKKNI (63 aa)) form a DNA-binding region, homeobox; TALE-type. Positions 305–362 (GASPYSMGGPPSGAATPMMSPAPAQDSMGYSLGSGGYDQQQPYDGSMGYDQLHQDLSP) are disordered.

This sequence belongs to the TALE/PBX homeobox family.

The protein localises to the nucleus. Functionally, transcription factor which acts with the selector homeodomain proteins altering the regulation of downstream target genes such as wingless (wg), teashirt (tsh) and decapentaplegic (dpp), thus affecting segmental identity. In Anopheles gambiae (African malaria mosquito), this protein is Homeobox protein extradenticle.